The following is a 73-amino-acid chain: Putative antitoxin VapB16 (73 aa).

It belongs to the UPF0330 family.

Its function is as follows. Possibly the antitoxin component of a type II toxin-antitoxin (TA) system. Its cognate toxin is VapC16 (Potential). This Archaeoglobus fulgidus (strain ATCC 49558 / DSM 4304 / JCM 9628 / NBRC 100126 / VC-16) protein is Putative antitoxin VapB16 (vapB16).